Here is a 218-residue protein sequence, read N- to C-terminus: Thiamine-phosphate synthase (218 aa).

Residues 43-47 and asparagine 78 contribute to the 4-amino-2-methyl-5-(diphosphooxymethyl)pyrimidine site; that span reads QFRDK. Mg(2+) is bound by residues aspartate 79 and aspartate 98. A 4-amino-2-methyl-5-(diphosphooxymethyl)pyrimidine-binding site is contributed by serine 117. 143–145 contributes to the 2-[(2R,5Z)-2-carboxy-4-methylthiazol-5(2H)-ylidene]ethyl phosphate binding site; the sequence is TNS. Lysine 146 is a 4-amino-2-methyl-5-(diphosphooxymethyl)pyrimidine binding site. 2-[(2R,5Z)-2-carboxy-4-methylthiazol-5(2H)-ylidene]ethyl phosphate is bound by residues glycine 174 and 194-195; that span reads IS.

It belongs to the thiamine-phosphate synthase family. It depends on Mg(2+) as a cofactor.

It carries out the reaction 2-[(2R,5Z)-2-carboxy-4-methylthiazol-5(2H)-ylidene]ethyl phosphate + 4-amino-2-methyl-5-(diphosphooxymethyl)pyrimidine + 2 H(+) = thiamine phosphate + CO2 + diphosphate. The catalysed reaction is 2-(2-carboxy-4-methylthiazol-5-yl)ethyl phosphate + 4-amino-2-methyl-5-(diphosphooxymethyl)pyrimidine + 2 H(+) = thiamine phosphate + CO2 + diphosphate. It catalyses the reaction 4-methyl-5-(2-phosphooxyethyl)-thiazole + 4-amino-2-methyl-5-(diphosphooxymethyl)pyrimidine + H(+) = thiamine phosphate + diphosphate. It functions in the pathway cofactor biosynthesis; thiamine diphosphate biosynthesis; thiamine phosphate from 4-amino-2-methyl-5-diphosphomethylpyrimidine and 4-methyl-5-(2-phosphoethyl)-thiazole: step 1/1. In terms of biological role, condenses 4-methyl-5-(beta-hydroxyethyl)thiazole monophosphate (THZ-P) and 2-methyl-4-amino-5-hydroxymethyl pyrimidine pyrophosphate (HMP-PP) to form thiamine monophosphate (TMP). In Lactococcus lactis subsp. cremoris (strain SK11), this protein is Thiamine-phosphate synthase.